The sequence spans 335 residues: Cytochrome c biogenesis protein CcsA (335 aa).

8 helical membrane-spanning segments follow: residues 15–35 (FLLLFLTMLIYWAGAAFPNVT), 36–56 (WLPTLGTTGVAIANLCMATLL), 68–88 (LSNLYESLFFLAWGVTAIHLV), 97–117 (LVGVVTTPVAMGITAFAALSL), 142–162 (VMMLSYATLMVGSVLAIAFLV), 243–263 (IIGLGFPLLTIGIIAGAVWAN), 278–298 (WALITWLVFAAYLHARITKGW), and 304–324 (AILAASGFVVVWVCYLGVNLL).

The protein belongs to the CcmF/CycK/Ccl1/NrfE/CcsA family. As to quaternary structure, may interact with ccs1.

The protein localises to the cellular thylakoid membrane. In terms of biological role, required during biogenesis of c-type cytochromes (cytochrome c6 and cytochrome f) at the step of heme attachment. The chain is Cytochrome c biogenesis protein CcsA from Crocosphaera subtropica (strain ATCC 51142 / BH68) (Cyanothece sp. (strain ATCC 51142)).